The sequence spans 516 residues: MSNKPIADMIETIEHFAQTQPSYPVYNVLGQEHTYGDLKADSDSLAAVIDQLGLPEKSPVVVFGGQEYEMLATFVALTKSGHAYIPIDSHSALERVSAILEVAEPSLIIAISAFPLEQVSTPMINLAQVQEAFAQGNNYEITHPVKGDDNYYIIFTSGTTGKPKGVQISHDNLLSFTNWMITDKEFATPSRPQMLAQPPYSFDLSVMYWAPTLALGGTLFTLPSVITQDFKQLFAAIFSLPIAIWTSTPSFADMAMLSEYFNSEKMPGITHFYFDGEELTVKTAQKLRERFPNARIINAYGPTEATVALSAVAVTDEMLATLKRLPIGYTKADSPTFIIDEEGNKLPNGEQGEIIVSGPAVSKGYMNNPEKTAEAFFEFEDLPAYHTGDVGTMTDEGLLLYGGRMDFQIKFNGYRIELEDVSQNLNKSRFIESAVAVPRYNKDHKVQNLLAYVILKDGVREQFERDIDITKAIKEDLTDIMMSYMMPSKFLYRDSLPLTPNGKIDIKGLINEVNKR.

156-157 serves as a coordination point for ATP; that stretch reads TS. Asp-203 is a D-alanine binding site. 298–303 provides a ligand contact to ATP; the sequence is NAYGPT. Val-307 is a binding site for D-alanine. ATP is bound by residues Asp-389, 401–404, and Lys-503; that span reads YGGR. Residue Lys-503 participates in D-alanine binding.

The protein belongs to the ATP-dependent AMP-binding enzyme family. DltA subfamily.

Its subcellular location is the cytoplasm. It carries out the reaction holo-[D-alanyl-carrier protein] + D-alanine + ATP = D-alanyl-[D-alanyl-carrier protein] + AMP + diphosphate. It functions in the pathway cell wall biogenesis; lipoteichoic acid biosynthesis. In terms of biological role, catalyzes the first step in the D-alanylation of lipoteichoic acid (LTA), the activation of D-alanine and its transfer onto the D-alanyl carrier protein (Dcp) DltC. In an ATP-dependent two-step reaction, forms a high energy D-alanyl-AMP intermediate, followed by transfer of the D-alanyl residue as a thiol ester to the phosphopantheinyl prosthetic group of the Dcp. D-alanylation of LTA plays an important role in modulating the properties of the cell wall in Gram-positive bacteria, influencing the net charge of the cell wall. This is D-alanine--D-alanyl carrier protein ligase from Streptococcus pneumoniae serotype 4 (strain ATCC BAA-334 / TIGR4).